The sequence spans 585 residues: FAD-linked oxidoreductase apf9 (585 aa).

Residues methionine 1–alanine 19 form the signal peptide. Asparagine 40, asparagine 92, and asparagine 117 each carry an N-linked (GlcNAc...) asparagine glycan. Positions isoleucine 108–threonine 294 constitute an FAD-binding PCMH-type domain. Position 145 is a pros-8alpha-FAD histidine (histidine 145). N-linked (GlcNAc...) asparagine glycans are attached at residues asparagine 352, asparagine 412, and asparagine 495.

Belongs to the oxygen-dependent FAD-linked oxidoreductase family. The cofactor is FAD.

It participates in secondary metabolite biosynthesis. In terms of biological role, FAD-linked oxidoreductase; part of the gene cluster that mediates the biosynthesis of the cyclic tetrapeptide apicidin F (APF). The non-ribosomal peptide synthetase apf1 incorporates four different amino acids to produce apicidin F: L-phenylalanine, D-pipecolic acid (D-pip), N-methoxy-L-tryptophan and L-2-aminooctanedioic acid. L-Phenylalanine is the only proteinogenic amino acid directly used by apf1. The 3 other apf1 substrates are non-proteinogenic and have to be modified by other enzymes of the cluster. Lysine is converted to delta-1-pyrroline-5-carboxylate (P5C) which is reduced to L-pipecolic acid (L-pip) by apf3. L-pip is epimerized to D-pip, probably by apf1 activity, prior to incorporation. L-Tryptophan is N-oxidyzed by one of the cytochrome P450 monooxygenases (apf7 or apf8), and further methylated at the hydroxy group by the O-methyltransferase apf6 to yield N-methoxy-L-tryptophan. The synthesis of the fourth apf1 substrate is more complex. The fatty acid synthase apf5 is involved in the synthesis of the octanoic acid backbone of L-2-aminooctanedioic acid by fixing one acetyl-CoA unit and three malonyl-CoA units. Then one of the cytochrome P450 monooxygenases (apf7 or apf8) may oxidize this backbone to 2-oxooctanoic acid. The aminotransferase apf4 is predicted to catalyze the exchange of the keto group with an amino group. The next step would be the oxidation of 2-aminooctanoic acid by one of the cytochrome P450 monooxygenases (apf7 or apf8). The last step is the oxidation of 2-amino-8-hydroxyoctanoic acid to 2-aminooctanedioic acid is catalyzed by the FAD-dependent monooxygenase apf9. In Gibberella fujikuroi (strain CBS 195.34 / IMI 58289 / NRRL A-6831) (Bakanae and foot rot disease fungus), this protein is FAD-linked oxidoreductase apf9.